A 705-amino-acid chain; its full sequence is Protein arginine N-methyltransferase 7 (705 aa).

2 SAM-dependent MTase PRMT-type domains span residues 29-372 and 381-705; these read QNSW…YSLW and TKSV…QKKL.

This sequence belongs to the class I-like SAM-binding methyltransferase superfamily. Protein arginine N-methyltransferase family. PRMT7 subfamily.

Functionally, essential arginine methyltransferase that can both catalyze the formation of omega-N monomethylarginine (MMA) and symmetrical dimethylarginine (sDMA). Specifically mediates the symmetrical dimethylation of arginine residues in the small nuclear ribonucleoproteins SmD1 and SmD3. The sequence is that of Protein arginine N-methyltransferase 7 (Art7) from Drosophila simulans (Fruit fly).